A 385-amino-acid polypeptide reads, in one-letter code: S-adenosylmethionine synthase (385 aa).

His16 is an ATP binding site. Position 18 (Asp18) interacts with Mg(2+). Glu44 lines the K(+) pocket. Positions 57 and 100 each coordinate L-methionine. The flexible loop stretch occupies residues 100-110 (QSPDINQGVDR). Residues 164–166 (DGK), 230–231 (KF), Asp239, 245–246 (RK), Ala262, and Lys266 contribute to the ATP site. An L-methionine-binding site is contributed by Asp239. L-methionine is bound at residue Lys270.

It belongs to the AdoMet synthase family. Homotetramer; dimer of dimers. The cofactor is Mg(2+). K(+) is required as a cofactor.

Its subcellular location is the cytoplasm. It catalyses the reaction L-methionine + ATP + H2O = S-adenosyl-L-methionine + phosphate + diphosphate. The protein operates within amino-acid biosynthesis; S-adenosyl-L-methionine biosynthesis; S-adenosyl-L-methionine from L-methionine: step 1/1. Functionally, catalyzes the formation of S-adenosylmethionine (AdoMet) from methionine and ATP. The overall synthetic reaction is composed of two sequential steps, AdoMet formation and the subsequent tripolyphosphate hydrolysis which occurs prior to release of AdoMet from the enzyme. This chain is S-adenosylmethionine synthase, found in Helicobacter pylori (strain P12).